A 418-amino-acid chain; its full sequence is Tyrosine--tRNA ligase (418 aa).

Tyrosine 34 lines the L-tyrosine pocket. Residues 39 to 48 carry the 'HIGH' region motif; that stretch reads PTADSLHLGH. L-tyrosine contacts are provided by tyrosine 169 and glutamine 173. The 'KMSKS' region signature appears at 229 to 233; that stretch reads KFGKS. ATP is bound at residue lysine 232. The S4 RNA-binding domain maps to 352–418; the sequence is LNIVDLLVTA…GKKKYFVLTY (67 aa).

This sequence belongs to the class-I aminoacyl-tRNA synthetase family. TyrS type 1 subfamily. In terms of assembly, homodimer.

It is found in the cytoplasm. The enzyme catalyses tRNA(Tyr) + L-tyrosine + ATP = L-tyrosyl-tRNA(Tyr) + AMP + diphosphate + H(+). Its function is as follows. Catalyzes the attachment of tyrosine to tRNA(Tyr) in a two-step reaction: tyrosine is first activated by ATP to form Tyr-AMP and then transferred to the acceptor end of tRNA(Tyr). This Streptococcus gordonii (strain Challis / ATCC 35105 / BCRC 15272 / CH1 / DL1 / V288) protein is Tyrosine--tRNA ligase.